The following is a 122-amino-acid chain: LYR motif-containing protein 1 (122 aa).

Belongs to the complex I LYR family.

May promote cell proliferation and inhibition of apoptosis of preadipocytes. The polypeptide is LYR motif-containing protein 1 (Lyrm1) (Rattus norvegicus (Rat)).